A 1317-amino-acid polypeptide reads, in one-letter code: MSVKIHIDRGGTFTDAIATFADESRPPIVIKLLSEDPSNYKDASIEAVRRILEIVQGKSIPRTEKLDTSCINHLRCGTTVATNALLERKGERCAFITTKGFKDGLLIGNQSRPNIFELGIRRPEVLYSKVIEVDERVTLEDYVEDPMKVKTTIDGSDPSLVVGRSGEVVRIMKKVDCDALRKDLQALYDEGFTSIAVCLAHSFTFPDHELLVGKIAEEVGFSNISLSTKLMPMIKYVPRATSATADAYLSPVVRRYLAGFQSGFLHGLKTKDNSKGVRCEFMQSDGGLVDVNKFSGLHAILSGPAGGVVGFALTSYDEDVKIPVIGFDMGGTSTDVSRYGGSYEHVFETTTAGVTIQSPQLDINTVAAGGGSRLFWKNGLFVVGPESAGAHPGPVCYRKGGYLTVTDANLLLGRLLPESFPKIFGPNEDESLDVESTRKEFEKLTAEINSGLEKERQMTADEVAFGFIKIANETMARPIRALTEAKGHDISIHRLTSFGGAGGQHCAAIAKSLGITQVLVHKYSSILSAYGMALADVVSEVQEPSSFTLDDSNTESIKKRFDSLKEEAKANLEEQGFTESQISYELFLNCRYQGTDSTLMISKPLESWDFKQSFFDKHKQEFGFIFENKDIIIDDIRIRASGKSFQSKEPSVDAQLKELKFEPVQKSLATCVKDIYFEGGRVPSEVYSLDNLPVGTIVNGPSLIVDKTQTIVVPPKAVARILHTHVVIDISHGNEYTANDSLAKASTIDPIYLSVFGSRFMAVAEQMGRALQKTSVSTNVKERLDYSCALFDAKGNLVANAPHMPVHLGSMSTCVRTQAKIHEGKLKPGDVLVTNHPSYGGTHLPDITTITPHFEGDEIMFYVAARAHHADIGGILPGSMPSSSKELSEEGATIKSEKLVVDGVFQEERMIDLLYNEPAKVEGGSGSRCLRDNLNDLKAQVSANQKGINLITSLIKEYGKNSVLRYMKAIQENAESAVRQLLLGVRERFLGEDLYAEDHMDDGSKICLRITIDEENGDAIFDFTGTTEEIYGNINAPEAVTYSAIIYCLRVLISENIPLNQGCLLPIKVIIPDNCFLKPSETAAVVGGNVLTSQRITDTILKAFQACAASQGDTNNLTFGIGGKDPETGEVKPGFGYYETICGGSGAIDGLDGTSGVHTHMTNTRITDLEVLERRYPVILRKFIIRENSGGAGKYKGGDGVIRDIEFRIPVTLSILSERRAYHPYGMKGGKDAECGKNIWIRKDILPSGEQRVRQINVGGKNTCHMQAGDHIVIMTPGGGGYGPPSERVDTVKKANGVQHFRANGTISQLQEIQHTN.

It belongs to the oxoprolinase family.

This is an uncharacterized protein from Schizosaccharomyces pombe (strain 972 / ATCC 24843) (Fission yeast).